A 407-amino-acid chain; its full sequence is Magnesium-protoporphyrin IX monomethyl ester [oxidative] cyclase 1, chloroplastic (407 aa).

Over residues 1–10 (MQTTLKQQRA) the composition is skewed to polar residues. The interval 1–28 (MQTTLKQQRASGRVSARQPFRSAAVARP) is disordered.

The protein belongs to the AcsF family. Fe cation serves as cofactor.

The protein localises to the plastid. It is found in the chloroplast thylakoid membrane. The catalysed reaction is Mg-protoporphyrin IX 13-monomethyl ester + 3 NADPH + 3 O2 + 2 H(+) = 3,8-divinyl protochlorophyllide a + 3 NADP(+) + 5 H2O. Its pathway is porphyrin-containing compound metabolism; chlorophyll biosynthesis. Catalyzes the formation of the isocyclic ring in chlorophyll biosynthesis under oxygen- and copper-deficient conditions. Mediates the cyclase reaction, which results in the formation of divinylprotochlorophyllide (Pchlide) characteristic of all chlorophylls from magnesium-protoporphyrin IX 13-monomethyl ester (MgPMME). This is Magnesium-protoporphyrin IX monomethyl ester [oxidative] cyclase 1, chloroplastic (CRD1) from Chlamydomonas reinhardtii (Chlamydomonas smithii).